A 143-amino-acid chain; its full sequence is UPF0201 protein Pisl_1658 (143 aa).

This sequence belongs to the UPF0201 family.

This is UPF0201 protein Pisl_1658 from Pyrobaculum islandicum (strain DSM 4184 / JCM 9189 / GEO3).